A 134-amino-acid chain; its full sequence is Small ribosomal subunit protein uS11 (134 aa).

Belongs to the universal ribosomal protein uS11 family. In terms of assembly, part of the 30S ribosomal subunit. Interacts with proteins S7 and S18. Binds to IF-3.

In terms of biological role, located on the platform of the 30S subunit, it bridges several disparate RNA helices of the 16S rRNA. Forms part of the Shine-Dalgarno cleft in the 70S ribosome. The polypeptide is Small ribosomal subunit protein uS11 (Herminiimonas arsenicoxydans).